The sequence spans 59 residues: MAELKITLKRSVIGRPQNQRATVKALGLGKVNSTVTKPANEAIKGMVNTISHLVDVEEV.

It belongs to the universal ribosomal protein uL30 family. Part of the 50S ribosomal subunit.

The chain is Large ribosomal subunit protein uL30 from Enterococcus faecalis (strain ATCC 700802 / V583).